The primary structure comprises 147 residues: Transthyretin (147 aa).

The N-terminal stretch at 1-20 (MASLRLFLLCLAGLIFASEA) is a signal peptide. Cys-30 is subject to Sulfocysteine. Lys-35 contributes to the L-thyroxine binding site. Glu-62 is subject to 4-carboxyglutamate. Ser-72 bears the Phosphoserine mark. L-thyroxine is bound at residue Glu-74. N-linked (GlcNAc...) asparagine glycosylation is present at Asn-118. Ser-137 provides a ligand contact to L-thyroxine.

This sequence belongs to the transthyretin family. As to quaternary structure, homotetramer. Dimer of dimers. In the homotetramer, subunits assemble around a central channel that can accommodate two ligand molecules. Interacts with RBP4. Post-translationally, sulfonation of the reactive cysteine Cys-30 enhances the stability of the native conformation of TTR, avoiding misassembly of the protein leading to amyloid formation. As to expression, detected in serum and cerebrospinal fluid (at protein level). Highly expressed in the choroid plexus. Detected at lower levels in the liver.

Its subcellular location is the secreted. In terms of biological role, thyroid hormone-binding protein. Probably transports thyroxine from the bloodstream to the brain. The chain is Transthyretin (Ttr) from Rattus norvegicus (Rat).